A 414-amino-acid chain; its full sequence is 2,3-diketo-5-methylthiopentyl-1-phosphate enolase (414 aa).

Residue Lys-99 is the Proton acceptor of the active site. Substrate-binding positions include Lys-148, 174–177, His-265, Gly-338, and 360–361; these read KDDE and GG. Residues Lys-174, Asp-176, and Glu-177 each contribute to the Mg(2+) site. Position 174 is an N6-carboxylysine (Lys-174).

It belongs to the RuBisCO large chain family. Type IV subfamily. In terms of assembly, homodimer. Mg(2+) is required as a cofactor.

It catalyses the reaction 5-methylsulfanyl-2,3-dioxopentyl phosphate = 2-hydroxy-5-methylsulfanyl-3-oxopent-1-enyl phosphate. Its pathway is amino-acid biosynthesis; L-methionine biosynthesis via salvage pathway; L-methionine from S-methyl-5-thio-alpha-D-ribose 1-phosphate: step 3/6. Its function is as follows. Catalyzes the enolization of 2,3-diketo-5-methylthiopentyl-1-phosphate (DK-MTP-1-P) into 2-hydroxy-3-keto-5-methylthiopentenyl-1-phosphate (HK-MTPenyl-1-P). This chain is 2,3-diketo-5-methylthiopentyl-1-phosphate enolase, found in Bacillus thuringiensis (strain Al Hakam).